The primary structure comprises 32 residues: Photosystem I reaction center subunit XII (32 aa).

Residues 3–23 (SISDGQIVVALISAFIIVILA) traverse the membrane as a helical segment.

The protein belongs to the PsaM family.

The protein resides in the plastid. It localises to the chloroplast thylakoid membrane. The protein is Photosystem I reaction center subunit XII of Anthoceros angustus (Hornwort).